We begin with the raw amino-acid sequence, 453 residues long: TATA box-binding protein-associated factor RNA polymerase I subunit A (453 aa).

Component of the transcription factor SL1/TIF-IB complex, composed of TBP and at least TAF1A, TAF1B, TAF1C and TAF1D. In the complex interacts directly with TBP, TAF1A and TAF1B. Interaction of the SL1/TIF-IB subunits with TBP excludes interaction of TBP with the transcription factor IID (TFIID) subunits. Interacts with UBFT. Interacts with CEBPA (isoform 1 and isoform 4). Part of Pol I pre-initiation complex (PIC), in which Pol I core assembles with RRN3 and promoter-bound UTBF and SL1/TIF-IB complex.

Its subcellular location is the nucleus. It localises to the nucleolus. Component of the transcription factor SL1/TIF-IB complex, which is involved in the assembly of the PIC (pre-initiation complex) during RNA polymerase I-dependent transcription. The rate of PIC formation probably is primarily dependent on the rate of association of SL1/TIF-IB with the rDNA promoter. SL1/TIF-IB is involved in stabilization of nucleolar transcription factor 1/UBTF on rDNA. Formation of SL1/TIF-IB excludes the association of TBP with TFIID subunits. The chain is TATA box-binding protein-associated factor RNA polymerase I subunit A (Taf1a) from Mus musculus (Mouse).